The following is a 115-amino-acid chain: Small ribosomal subunit protein bS16 (115 aa).

Residues 81-115 are disordered; the sequence is GLAPKPTYNEQPKKSAPKAKAQERAKAAADAAAAA.

It belongs to the bacterial ribosomal protein bS16 family.

The polypeptide is Small ribosomal subunit protein bS16 (Gluconobacter oxydans (strain 621H) (Gluconobacter suboxydans)).